A 208-amino-acid polypeptide reads, in one-letter code: MAKNYYDITLALAGICQSARLVQQLAHEGQCDNDALNTVLSGLLQTNPPSTLAVYGGNEQSLKMGLETLQSVLNANRQGPAAELTRYTLSLMVLERKLNANKSAMNTLGDRISQLDRQLAHFDLESETMMSSLAAIYTDVISPLGPRIQVIGSPAILQSTLVQAKIRATLLAGIRSAVLWQQVGGSRLQLMFSRNRLFKQAQSILAHI.

It belongs to the HflD family.

The protein localises to the cytoplasm. The protein resides in the cell inner membrane. This is High frequency lysogenization protein HflD homolog from Yersinia enterocolitica serotype O:8 / biotype 1B (strain NCTC 13174 / 8081).